We begin with the raw amino-acid sequence, 946 residues long: Bifunctional glutamine synthetase adenylyltransferase/adenylyl-removing enzyme (946 aa).

The interval 1-440 is adenylyl removase; the sequence is MKPLSSPLQQ…VFNELIGDDE (440 aa). The interval 449 to 946 is adenylyl transferase; sequence SEQWRELWQD…VSWQKWLVEE (498 aa).

Belongs to the GlnE family. Mg(2+) is required as a cofactor.

It carries out the reaction [glutamine synthetase]-O(4)-(5'-adenylyl)-L-tyrosine + phosphate = [glutamine synthetase]-L-tyrosine + ADP. The enzyme catalyses [glutamine synthetase]-L-tyrosine + ATP = [glutamine synthetase]-O(4)-(5'-adenylyl)-L-tyrosine + diphosphate. Functionally, involved in the regulation of glutamine synthetase GlnA, a key enzyme in the process to assimilate ammonia. When cellular nitrogen levels are high, the C-terminal adenylyl transferase (AT) inactivates GlnA by covalent transfer of an adenylyl group from ATP to specific tyrosine residue of GlnA, thus reducing its activity. Conversely, when nitrogen levels are low, the N-terminal adenylyl removase (AR) activates GlnA by removing the adenylyl group by phosphorolysis, increasing its activity. The regulatory region of GlnE binds the signal transduction protein PII (GlnB) which indicates the nitrogen status of the cell. This is Bifunctional glutamine synthetase adenylyltransferase/adenylyl-removing enzyme from Escherichia coli (strain SMS-3-5 / SECEC).